We begin with the raw amino-acid sequence, 726 residues long: Catalase-peroxidase (726 aa).

Residues 1–33 (MSTSDDIHNTTATGKCPFHQGGHDQSAGAGTTT) form a disordered region. Residues 105–226 (WHGAGTYRSI…LGATEMGLIY (122 aa)) constitute a cross-link (tryptophyl-tyrosyl-methioninium (Trp-Tyr) (with M-252)). Catalysis depends on His106, which acts as the Proton acceptor. Residues 226-252 (YVNPEGPDHSGEPLSAAAAIRATFGNM) constitute a cross-link (tryptophyl-tyrosyl-methioninium (Tyr-Met) (with W-105)). His267 lines the heme b pocket.

Belongs to the peroxidase family. Peroxidase/catalase subfamily. As to quaternary structure, homodimer or homotetramer. Heme b serves as cofactor. In terms of processing, formation of the three residue Trp-Tyr-Met cross-link is important for the catalase, but not the peroxidase activity of the enzyme.

The enzyme catalyses H2O2 + AH2 = A + 2 H2O. It catalyses the reaction 2 H2O2 = O2 + 2 H2O. Its function is as follows. Bifunctional enzyme with both catalase and broad-spectrum peroxidase activity. The sequence is that of Catalase-peroxidase from Escherichia coli (strain K12 / DH10B).